A 314-amino-acid polypeptide reads, in one-letter code: Lipoyl synthase (314 aa).

Residues Cys-61, Cys-66, Cys-72, Cys-87, Cys-91, Cys-94, and Ser-301 each contribute to the [4Fe-4S] cluster site. The 218-residue stretch at 73–290 folds into the Radical SAM core domain; it reads FGRGTATFMI…EEEAKKMGFS (218 aa).

This sequence belongs to the radical SAM superfamily. Lipoyl synthase family. Requires [4Fe-4S] cluster as cofactor.

It is found in the cytoplasm. The catalysed reaction is [[Fe-S] cluster scaffold protein carrying a second [4Fe-4S](2+) cluster] + N(6)-octanoyl-L-lysyl-[protein] + 2 oxidized [2Fe-2S]-[ferredoxin] + 2 S-adenosyl-L-methionine + 4 H(+) = [[Fe-S] cluster scaffold protein] + N(6)-[(R)-dihydrolipoyl]-L-lysyl-[protein] + 4 Fe(3+) + 2 hydrogen sulfide + 2 5'-deoxyadenosine + 2 L-methionine + 2 reduced [2Fe-2S]-[ferredoxin]. The protein operates within protein modification; protein lipoylation via endogenous pathway; protein N(6)-(lipoyl)lysine from octanoyl-[acyl-carrier-protein]: step 2/2. Catalyzes the radical-mediated insertion of two sulfur atoms into the C-6 and C-8 positions of the octanoyl moiety bound to the lipoyl domains of lipoate-dependent enzymes, thereby converting the octanoylated domains into lipoylated derivatives. In Dechloromonas aromatica (strain RCB), this protein is Lipoyl synthase.